A 256-amino-acid polypeptide reads, in one-letter code: tRNA pseudouridine synthase A (256 aa).

D43 (nucleophile) is an active-site residue. Residue Y94 coordinates substrate.

It belongs to the tRNA pseudouridine synthase TruA family.

The catalysed reaction is uridine(38/39/40) in tRNA = pseudouridine(38/39/40) in tRNA. Its function is as follows. Formation of pseudouridine at positions 38, 39 and 40 in the anticodon stem and loop of transfer RNAs. This is tRNA pseudouridine synthase A from Pyrobaculum aerophilum (strain ATCC 51768 / DSM 7523 / JCM 9630 / CIP 104966 / NBRC 100827 / IM2).